Reading from the N-terminus, the 355-residue chain is D-alanine--D-alanine ligase (355 aa).

One can recognise an ATP-grasp domain in the interval 143 to 350; that stretch reads KIIFSNLKIP…IEQLVAKLVD (208 aa). 178–233 contacts ATP; the sequence is LKKLNFPVFVKPSNSGSSLGISKVINKSEIIPALEKARGIDPSILIEEGLEVREIE. Residues Asp303, Glu317, and Asn319 each coordinate Mg(2+).

This sequence belongs to the D-alanine--D-alanine ligase family. Requires Mg(2+) as cofactor. Mn(2+) is required as a cofactor.

Its subcellular location is the cytoplasm. The catalysed reaction is 2 D-alanine + ATP = D-alanyl-D-alanine + ADP + phosphate + H(+). The protein operates within cell wall biogenesis; peptidoglycan biosynthesis. Its function is as follows. Cell wall formation. This chain is D-alanine--D-alanine ligase, found in Prochlorococcus marinus (strain AS9601).